Here is a 356-residue protein sequence, read N- to C-terminus: Dual-specificity RNA methyltransferase RlmN (356 aa).

Glutamate 89 serves as the catalytic Proton acceptor. Positions 108–341 constitute a Radical SAM core domain; the sequence is KHARYTICVS…CTIRESKGLD (234 aa). A disulfide bond links cysteine 115 and cysteine 346. [4Fe-4S] cluster contacts are provided by cysteine 122, cysteine 126, and cysteine 129. S-adenosyl-L-methionine contacts are provided by residues 172–173, serine 204, 227–229, and asparagine 303; these read GE and SLH. Cysteine 346 (S-methylcysteine intermediate) is an active-site residue.

It belongs to the radical SAM superfamily. RlmN family. The cofactor is [4Fe-4S] cluster.

The protein resides in the cytoplasm. It carries out the reaction adenosine(2503) in 23S rRNA + 2 reduced [2Fe-2S]-[ferredoxin] + 2 S-adenosyl-L-methionine = 2-methyladenosine(2503) in 23S rRNA + 5'-deoxyadenosine + L-methionine + 2 oxidized [2Fe-2S]-[ferredoxin] + S-adenosyl-L-homocysteine. The catalysed reaction is adenosine(37) in tRNA + 2 reduced [2Fe-2S]-[ferredoxin] + 2 S-adenosyl-L-methionine = 2-methyladenosine(37) in tRNA + 5'-deoxyadenosine + L-methionine + 2 oxidized [2Fe-2S]-[ferredoxin] + S-adenosyl-L-homocysteine. Functionally, specifically methylates position 2 of adenine 2503 in 23S rRNA and position 2 of adenine 37 in tRNAs. m2A2503 modification seems to play a crucial role in the proofreading step occurring at the peptidyl transferase center and thus would serve to optimize ribosomal fidelity. This is Dual-specificity RNA methyltransferase RlmN from Campylobacter lari (strain RM2100 / D67 / ATCC BAA-1060).